A 1354-amino-acid polypeptide reads, in one-letter code: Rho-associated protein kinase 1 (1354 aa).

Position 2 is an N-acetylserine (Ser-2). Residues 76–338 (YEVVKVIGRG…VEEIKRHLFF (263 aa)) form the Protein kinase domain. Residues 82 to 90 (IGRGAFGEV) and Lys-105 each bind ATP. Asp-198 (proton acceptor) is an active-site residue. The region spanning 341 to 409 (DQWAWETLRD…YSNRRYLPSA (69 aa)) is the AGC-kinase C-terminal domain. The tract at residues 368-727 (FDDLEEDKGD…KKLKEEREAR (360 aa)) is interaction with FHOD1. A coiled-coil region spans residues 422–692 (KSLQESLQKT…RLEQEVNEHK (271 aa)). The REM-1 domain maps to 479–556 (SAVSQIEKEK…LEEANDLLRT (78 aa)). An SHROOM3 binding region spans residues 707–946 (EAKSVAMCEM…TVSRLEETNS (240 aa)). One can recognise a RhoBD domain in the interval 949-1015 (TKDIEMLRKE…LAEIMNRKDF (67 aa)). The segment at 998 to 1010 (LKTQAVNKLAEIM) is RHOA binding. Positions 1011 to 1102 (NRKDFKIDRK…KLLDLSDSTS (92 aa)) form a coiled coil. Phosphoserine is present on residues Ser-1105 and Ser-1108. The interval 1115–1354 (NLPESRIEGW…VVKNTSGKTS (240 aa)) is auto-inhibitory. The PH domain maps to 1118-1317 (ESRIEGWLSV…WVTHLVKKIP (200 aa)). A Phorbol-ester/DAG-type zinc finger spans residues 1228 to 1283 (GHEFIPTLYHFPANCEACAKPLWHVFKPPPALECRRCHVKCHRDHLDKKEDLISPC). Residue Ser-1328 is modified to Phosphoserine. The disordered stretch occupies residues 1333-1354 (STRSTANQSFRKVVKNTSGKTS).

This sequence belongs to the protein kinase superfamily. AGC Ser/Thr protein kinase family. Homodimer. Interacts with RHOA (activated by GTP), RHOB, RHOC, GEM, MYLC2B, RHOE, PPP1R12A, LIMK1, LIMK2, TSG101, CHORDC1, DAPK3, PFN1 and JIP3. Interacts with FHOD1 in a Src-dependent manner. Interacts with PTEN. Interacts with ITGB1BP1 (via N-terminus and PTB domain). Interacts with SHROOM3. It depends on Mg(2+) as a cofactor. In terms of processing, autophosphorylated on serine and threonine residues. Post-translationally, cleaved by caspase-3 during apoptosis. This leads to constitutive activation of the kinase and membrane blebbing. In terms of tissue distribution, highly expressed in brain, heart, lung, liver, stomach, spleen, kidney, testis, muscle, embryo and placenta.

The protein resides in the cytoplasm. Its subcellular location is the cytoskeleton. It is found in the microtubule organizing center. It localises to the centrosome. The protein localises to the centriole. The protein resides in the golgi apparatus membrane. Its subcellular location is the cell projection. It is found in the bleb. It localises to the cell membrane. The protein localises to the lamellipodium. The protein resides in the ruffle. The enzyme catalyses L-seryl-[protein] + ATP = O-phospho-L-seryl-[protein] + ADP + H(+). It catalyses the reaction L-threonyl-[protein] + ATP = O-phospho-L-threonyl-[protein] + ADP + H(+). Activated by RHOA binding. Inhibited by Y-27632. Protein kinase which is a key regulator of the actin cytoskeleton and cell polarity. Involved in regulation of smooth muscle contraction, actin cytoskeleton organization, stress fiber and focal adhesion formation, neurite retraction, cell adhesion and motility via phosphorylation of DAPK3, GFAP, LIMK1, LIMK2, MYL9/MLC2, TPPP, PFN1 and PPP1R12A. Phosphorylates FHOD1 and acts synergistically with it to promote SRC-dependent non-apoptotic plasma membrane blebbing. Phosphorylates JIP3 and regulates the recruitment of JNK to JIP3 upon UVB-induced stress. Acts as a suppressor of inflammatory cell migration by regulating PTEN phosphorylation and stability. Acts as a negative regulator of VEGF-induced angiogenic endothelial cell activation. Required for centrosome positioning and centrosome-dependent exit from mitosis. Plays a role in terminal erythroid differentiation. Inhibits podocyte motility via regulation of actin cytoskeletal dynamics and phosphorylation of CFL1. Promotes keratinocyte terminal differentiation. Involved in osteoblast compaction through the fibronectin fibrillogenesis cell-mediated matrix assembly process, essential for osteoblast mineralization. May regulate closure of the eyelids and ventral body wall by inducing the assembly of actomyosin bundles. The polypeptide is Rho-associated protein kinase 1 (Rock1) (Mus musculus (Mouse)).